The following is a 201-amino-acid chain: Glycerol-3-phosphate acyltransferase (201 aa).

Transmembrane regions (helical) follow at residues 5–25, 55–75, 88–108, 118–138, and 164–184; these read LLGA…FGVV, KMGV…ILVA, WVTA…WLGF, LGIF…GYAV, and TYGP…LIFL.

The protein belongs to the PlsY family. As to quaternary structure, probably interacts with PlsX.

It localises to the cell inner membrane. The catalysed reaction is an acyl phosphate + sn-glycerol 3-phosphate = a 1-acyl-sn-glycero-3-phosphate + phosphate. The protein operates within lipid metabolism; phospholipid metabolism. Its function is as follows. Catalyzes the transfer of an acyl group from acyl-phosphate (acyl-PO(4)) to glycerol-3-phosphate (G3P) to form lysophosphatidic acid (LPA). This enzyme utilizes acyl-phosphate as fatty acyl donor, but not acyl-CoA or acyl-ACP. This Anaeromyxobacter sp. (strain K) protein is Glycerol-3-phosphate acyltransferase.